We begin with the raw amino-acid sequence, 188 residues long: Insulin-like peptide INSL6 (188 aa).

An N-terminal signal peptide occupies residues 1 to 22 (MKQLCCSCLLWLGLLLAPFSQE). Intrachain disulfides connect C33–C169, C45–C182, and C168–C173. Positions 53 to 158 (FSMEEQSPMT…SGLFWGNHPQ (106 aa)) are cleaved as a propeptide — connecting peptide.

It belongs to the insulin family. As to expression, testis and prostate specific.

Its subcellular location is the secreted. In terms of biological role, may have a role in sperm development and fertilization. The polypeptide is Insulin-like peptide INSL6 (Insl6) (Rattus norvegicus (Rat)).